Reading from the N-terminus, the 319-residue chain is 8-methylmenaquinol:fumarate reductase iron-sulfur subunit (319 aa).

A 2Fe-2S ferredoxin-type domain is found at 1–96 (MKFIIDRFDG…TFRISPLGNH (96 aa)). Residues C51, C56, C59, and C71 each coordinate [2Fe-2S] cluster. 4Fe-4S ferredoxin-type domains are found at residues 139–168 (FDRIIKQWDCILCGSCVSECNKFSADQSDY) and 193–224 (VKPAVANGLWNCVHCHECTNRCPKHISAAEDI). 8 residues coordinate [4Fe-4S] cluster: C148, C151, C154, C158, C204, C207, C210, and C214.

It belongs to the succinate dehydrogenase/fumarate reductase iron-sulfur protein family. In terms of assembly, the MFR complex is composed of three subunits: a flavoprotein (SdhA), an iron-sulfur protein (SdhB), and one hydrophobic anchor protein (SdhE). [2Fe-2S] cluster is required as a cofactor. Requires [4Fe-4S] cluster as cofactor.

Its subcellular location is the periplasm. The protein resides in the cell membrane. The catalysed reaction is 8-methylmenaquinone-6 + succinate = 8-methylmenaquinol-6 + fumarate. Its function is as follows. Iron-sulfur subunit of 8-methylmenaquinol:fumarate reductase (MFR), that catalyzes the reduction of fumarate using 8-methylmenaquinol-6 as electron donor. The complex shows no succinate oxidation activity. Is involved in anaerobic metabolism. The polypeptide is 8-methylmenaquinol:fumarate reductase iron-sulfur subunit (Wolinella succinogenes (strain ATCC 29543 / DSM 1740 / CCUG 13145 / JCM 31913 / LMG 7466 / NCTC 11488 / FDC 602W) (Vibrio succinogenes)).